The following is a 104-amino-acid chain: Large ribosomal subunit protein uL24 (104 aa).

Belongs to the universal ribosomal protein uL24 family. As to quaternary structure, part of the 50S ribosomal subunit.

Functionally, one of two assembly initiator proteins, it binds directly to the 5'-end of the 23S rRNA, where it nucleates assembly of the 50S subunit. Its function is as follows. One of the proteins that surrounds the polypeptide exit tunnel on the outside of the subunit. The protein is Large ribosomal subunit protein uL24 of Alteromonas mediterranea (strain DSM 17117 / CIP 110805 / LMG 28347 / Deep ecotype).